A 360-amino-acid chain; its full sequence is Peptide chain release factor 1 (360 aa).

N5-methylglutamine is present on Gln-235. The disordered stretch occupies residues 281 to 310 (AERQRQDAAQAESRRLQVGSGDRSQRIRTY).

Belongs to the prokaryotic/mitochondrial release factor family. Post-translationally, methylated by PrmC. Methylation increases the termination efficiency of RF1.

Its subcellular location is the cytoplasm. Functionally, peptide chain release factor 1 directs the termination of translation in response to the peptide chain termination codons UAG and UAA. This Stenotrophomonas maltophilia (strain K279a) protein is Peptide chain release factor 1.